The primary structure comprises 68 residues: Small cysteine-rich protein 5 (68 aa).

Positions 1–24 (MAVKFHLCLLLIILVGMGAHVAFA) are cleaved as a signal peptide.

It belongs to the Cnidaria small cysteine-rich protein (SCRiP) family. gamma subfamily. Contains 4 disulfide bonds.

It localises to the secreted. It is found in the nematocyst. Its function is as follows. Induces neurotoxic symptoms on zebrafish. Has also been claimed to be implied in calcification, but tests on homolog proteins suggest that proteins of this family have a neurotoxic function and not a calcification function. This chain is Small cysteine-rich protein 5, found in Orbicella faveolata (Mountainous star coral).